We begin with the raw amino-acid sequence, 522 residues long: Lysine--tRNA ligase (522 aa).

A 'HIGH' region motif is present at residues 44–52; sequence PSGLPHIGT. Residues 290-294 carry the 'KMSKS' region motif; that stretch reads KISKS. Lys293 is a binding site for ATP.

This sequence belongs to the class-I aminoacyl-tRNA synthetase family.

It localises to the cytoplasm. The catalysed reaction is tRNA(Lys) + L-lysine + ATP = L-lysyl-tRNA(Lys) + AMP + diphosphate. This chain is Lysine--tRNA ligase, found in Rickettsia bellii (strain RML369-C).